Consider the following 328-residue polypeptide: Global transcription regulator sge1 (328 aa).

Disordered regions lie at residues 94–120 (PGEK…PRQR) and 251–293 (QMHQ…QYVH). Composition is skewed to low complexity over residues 106 to 116 (KSTTQSGGISK), 251 to 261 (QMHQPQVHQPL), and 282 to 293 (AHQPQVHQQYVH).

This sequence belongs to the MIT1/WOR1 family.

Its subcellular location is the nucleus. Its function is as follows. Global transcriptional regulator of transcription that impacts, but is not absolutely required for secondary metabolism and pathogenicity on maize. Regulates synthesis of multiple secondary metabolites, including fumonisins and fusarins. In Gibberella moniliformis (strain M3125 / FGSC 7600) (Maize ear and stalk rot fungus), this protein is Global transcription regulator sge1.